The chain runs to 407 residues: Imidazolonepropionase (407 aa).

Fe(3+) contacts are provided by His-68 and His-70. Zn(2+) is bound by residues His-68 and His-70. The 4-imidazolone-5-propanoate site is built by Arg-77, Tyr-140, and His-173. Tyr-140 is an N-formimidoyl-L-glutamate binding site. Residue His-238 coordinates Fe(3+). His-238 is a binding site for Zn(2+). Residue Gln-241 coordinates 4-imidazolone-5-propanoate. Position 313 (Asp-313) interacts with Fe(3+). Asp-313 contacts Zn(2+). Residues Asn-315 and Gly-317 each coordinate N-formimidoyl-L-glutamate. Residue Thr-318 participates in 4-imidazolone-5-propanoate binding.

It belongs to the metallo-dependent hydrolases superfamily. HutI family. It depends on Zn(2+) as a cofactor. Fe(3+) is required as a cofactor.

Its subcellular location is the cytoplasm. It catalyses the reaction 4-imidazolone-5-propanoate + H2O = N-formimidoyl-L-glutamate. The protein operates within amino-acid degradation; L-histidine degradation into L-glutamate; N-formimidoyl-L-glutamate from L-histidine: step 3/3. Functionally, catalyzes the hydrolytic cleavage of the carbon-nitrogen bond in imidazolone-5-propanoate to yield N-formimidoyl-L-glutamate. It is the third step in the universal histidine degradation pathway. This Burkholderia ambifaria (strain MC40-6) protein is Imidazolonepropionase.